Here is a 310-residue protein sequence, read N- to C-terminus: 4-hydroxyproline 2-epimerase (310 aa).

Cys88 functions as the Proton acceptor in the catalytic mechanism. Residues 89–90 (GH), His208, and Asp232 contribute to the substrate site. Cys236 acts as the Proton donor in catalysis. 237–238 (GT) contacts substrate.

This sequence belongs to the proline racemase family.

It catalyses the reaction trans-4-hydroxy-L-proline = cis-4-hydroxy-D-proline. Its function is as follows. Catalyzes the epimerization of trans-4-hydroxy-L-proline (t4LHyp) to cis-4-hydroxy-D-proline (c4DHyp). Is likely involved in a degradation pathway that converts t4LHyp to alpha-ketoglutarate. Can also catalyze the dehydration of trans-3-hydroxy-L-proline (t3LHyp) to Delta(1)-pyrroline-2-carboxylate (Pyr2C), albeit with 42-fold lower efficiency. Displays no proline racemase activity. In Burkholderia thailandensis (strain ATCC 700388 / DSM 13276 / CCUG 48851 / CIP 106301 / E264), this protein is 4-hydroxyproline 2-epimerase.